Reading from the N-terminus, the 101-residue chain is NAD(P)H-quinone oxidoreductase subunit 4L, chloroplastic (101 aa).

Helical transmembrane passes span 2-22 (MLEH…FGLI), 32-52 (MCLE…SHLF), and 61-81 (IFSI…LAIV).

The protein belongs to the complex I subunit 4L family. NDH is composed of at least 16 different subunits, 5 of which are encoded in the nucleus.

The protein resides in the plastid. The protein localises to the chloroplast thylakoid membrane. The catalysed reaction is a plastoquinone + NADH + (n+1) H(+)(in) = a plastoquinol + NAD(+) + n H(+)(out). It carries out the reaction a plastoquinone + NADPH + (n+1) H(+)(in) = a plastoquinol + NADP(+) + n H(+)(out). NDH shuttles electrons from NAD(P)H:plastoquinone, via FMN and iron-sulfur (Fe-S) centers, to quinones in the photosynthetic chain and possibly in a chloroplast respiratory chain. The immediate electron acceptor for the enzyme in this species is believed to be plastoquinone. Couples the redox reaction to proton translocation, and thus conserves the redox energy in a proton gradient. The chain is NAD(P)H-quinone oxidoreductase subunit 4L, chloroplastic from Piper cenocladum (Ant piper).